The sequence spans 245 residues: Orotidine 5'-phosphate decarboxylase (245 aa).

Substrate contacts are provided by residues Asp-22, Lys-44, 71 to 80 (DLKFHDIPNT), Thr-131, Arg-192, Gln-201, Gly-221, and Arg-222. The active-site Proton donor is Lys-73.

The protein belongs to the OMP decarboxylase family. Type 1 subfamily. As to quaternary structure, homodimer.

The catalysed reaction is orotidine 5'-phosphate + H(+) = UMP + CO2. It participates in pyrimidine metabolism; UMP biosynthesis via de novo pathway; UMP from orotate: step 2/2. Its function is as follows. Catalyzes the decarboxylation of orotidine 5'-monophosphate (OMP) to uridine 5'-monophosphate (UMP). In Escherichia coli O45:K1 (strain S88 / ExPEC), this protein is Orotidine 5'-phosphate decarboxylase.